A 231-amino-acid chain; its full sequence is Small ribosomal subunit protein uS3 (231 aa).

Residues 39–107 (IRKFIMKTLP…GVSLNIVEIR (69 aa)) enclose the KH type-2 domain.

Belongs to the universal ribosomal protein uS3 family. As to quaternary structure, part of the 30S ribosomal subunit. Forms a tight complex with proteins S10 and S14.

Functionally, binds the lower part of the 30S subunit head. Binds mRNA in the 70S ribosome, positioning it for translation. In Zymomonas mobilis subsp. mobilis (strain ATCC 31821 / ZM4 / CP4), this protein is Small ribosomal subunit protein uS3.